A 1541-amino-acid polypeptide reads, in one-letter code: ATP-binding cassette sub-family C member 2 (1541 aa).

The Extracellular segment spans residues 1–26; that stretch reads MDKFCNSTFWDLSLLESPEADLPLCF. The N-linked (GlcNAc...) asparagine glycan is linked to asparagine 6. The helical transmembrane segment at 27–47 threads the bilayer; the sequence is EQTVLVWIPLGFLWLLAPWQL. At 48–67 the chain is on the cytoplasmic side; that stretch reads YSVYRSRTKRSSITKFYLAK. Residues 68–88 traverse the membrane as a helical segment; sequence QVFVVFLLILAAIDLSLALTE. Topologically, residues 89–92 are extracellular; that stretch reads DTGQ. The chain crosses the membrane as a helical span at residues 93 to 113; that stretch reads ATVPPVRYTNPILYLCTWLLV. The Cytoplasmic segment spans residues 114 to 125; that stretch reads LAVQHSRQWCVR. Residues 126–146 traverse the membrane as a helical segment; it reads KNSWFLSLFWILSVLCGVFQF. Residues 147 to 164 lie on the Extracellular side of the membrane; sequence QTLIRALLKDSKSNMAYS. Residues 165 to 185 traverse the membrane as a helical segment; that stretch reads YLFFVSYGFQIVLLILTAFSG. Topologically, residues 186–309 are cytoplasmic; the sequence is PSDSTQTPSV…DYPKSWLIKS (124 aa). 2 positions are modified to phosphoserine: serine 279 and serine 281. Residues 310–330 form a helical membrane-spanning segment; that stretch reads LFKTFHVVILKSFILKLIHDL. Residues 318–601 form the ABC transmembrane type-1 1 domain; the sequence is ILKSFILKLI…LPMVTSSILQ (284 aa). The Extracellular portion of the chain corresponds to 331-356; it reads LVFLNPQLLKLLIGFVKSSNSYVWFG. Residues 357–377 form a helical membrane-spanning segment; the sequence is YICAILMFAVTLIQSFCLQSY. Topologically, residues 378–433 are cytoplasmic; it reads FQHCFVLGMCVRTTVMSSIYKKALTLSNLARKQYTIGETVNLMSVDSQKLMDATNY. The helical transmembrane segment at 434-454 threads the bilayer; it reads MQLVWSSVIQITLSIFFLWRE. At 455–457 the chain is on the extracellular side; it reads LGP. A helical transmembrane segment spans residues 458–478; the sequence is SILAGVGVMVLLIPVNGVLAT. The Cytoplasmic portion of the chain corresponds to 479 to 540; the sequence is KIRNIQVQNM…NLLRFGQLQS (62 aa). Residues 541 to 561 traverse the membrane as a helical segment; it reads LLIFILQITPILVSVVTFSVY. Over 562 to 583 the chain is Extracellular; sequence VLVDSANVLNAEKAFTSITLFN. The chain crosses the membrane as a helical span at residues 584-604; it reads ILRFPLSMLPMVTSSILQASV. Over 605–967 the chain is Cytoplasmic; it reads SVDRLERYLG…VKFSIYLKYL (363 aa). Residues 633 to 857 enclose the ABC transporter 1 domain; sequence VKFSEASFTW…KGVFARNWKT (225 aa). 667-674 provides a ligand contact to ATP; the sequence is GTVGSGKS. Disordered stretches follow at residues 862–881 and 901–923; these read SGPE…DDDD and RENS…GKSL. Serine 874 is subject to Phosphoserine. Residues 906-915 show a composition bias toward low complexity; it reads RRTLSRSSRS. Phosphoserine occurs at positions 922 and 926. A helical membrane pass occupies residues 968 to 988; the sequence is QAVGWWSILFIILFYGLNNVA. Residues 975-1260 form the ABC transmembrane type-1 2 domain; the sequence is ILFIILFYGL…LVRMTSEAET (286 aa). The Extracellular segment spans residues 989–1029; that stretch reads FIGSNLWLSAWTSDSDNLNGTNNSSSHRDMRIGVFGALGLA. 3 N-linked (GlcNAc...) asparagine glycosylation sites follow: asparagine 1007, asparagine 1010, and asparagine 1011. Residues 1030–1050 traverse the membrane as a helical segment; sequence QGICLLISTLWSIYACRNASK. Residues 1051–1093 are Cytoplasmic-facing; it reads ALHGQLLTNILRAPMRFFDTTPTGRIVNRFSGDISTVDDLLPQ. Residues 1094–1114 form a helical membrane-spanning segment; sequence TLRSWMMCFFGIAGTLVMICM. Alanine 1115 is a topological domain (extracellular). Residues 1116–1136 traverse the membrane as a helical segment; that stretch reads TPVFAIIIIPLSILYISVQVF. Residues 1137–1207 are Cytoplasmic-facing; it reads YVATSRQLRR…TSNRWLAIRL (71 aa). The chain crosses the membrane as a helical span at residues 1208–1228; the sequence is ELVGNLVVFCSALLLVIYRKT. The Extracellular portion of the chain corresponds to 1229-1230; sequence LT. The chain crosses the membrane as a helical span at residues 1231-1251; sequence GDVVGFVLSNALNITQTLNWL. The Cytoplasmic portion of the chain corresponds to 1252 to 1541; that stretch reads VRMTSEAETN…GIENVNHTEL (290 aa). The 235-residue stretch at 1296–1530 folds into the ABC transporter 2 domain; the sequence is IQFNNYQVRY…RGSFYLMAKE (235 aa). ATP is bound at residue 1330–1337; sequence GRTGAGKS. Phosphoserine is present on serine 1434.

The protein belongs to the ABC transporter superfamily. ABCC family. Conjugate transporter (TC 3.A.1.208) subfamily. As to expression, mainly expressed in the liver.

It is found in the apical cell membrane. The enzyme catalyses an S-substituted glutathione(in) + ATP + H2O = an S-substituted glutathione(out) + ADP + phosphate + H(+). It carries out the reaction taurolithocholate 3-sulfate(in) + ATP + H2O = taurolithocholate 3-sulfate(out) + ADP + phosphate + H(+). The catalysed reaction is ATP + H2O + xenobioticSide 1 = ADP + phosphate + xenobioticSide 2.. It catalyses the reaction 17beta-estradiol 17-O-(beta-D-glucuronate)(in) + ATP + H2O = 17beta-estradiol 17-O-(beta-D-glucuronate)(out) + ADP + phosphate + H(+). The enzyme catalyses leukotriene C4(in) + ATP + H2O = leukotriene C4(out) + ADP + phosphate + H(+). It carries out the reaction (4Z,15Z)-bilirubin IXalpha C8-beta-D-glucuronoside(in) + ATP + H2O = (4Z,15Z)-bilirubin IXalpha C8-beta-D-glucuronoside(out) + ADP + phosphate + H(+). The catalysed reaction is (4Z,15Z)-bilirubin IXalpha C8,C12-beta-D-bisglucuronoside(in) + ATP + H2O = (4Z,15Z)-bilirubin IXalpha C8,C12-beta-D-bisglucuronoside(out) + ADP + phosphate + H(+). In terms of biological role, ATP-dependent transporter of the ATP-binding cassette (ABC) family that binds and hydrolyzes ATP to enable active transport of various substrates including many drugs, toxicants and endogenous compound across cell membranes. Transports a wide variety of conjugated organic anions such as sulfate-, glucuronide- and glutathione (GSH)-conjugates of endo- and xenobiotics substrates. Mediates hepatobiliary excretion of mono- and bis-glucuronidated bilirubin molecules and therefore play an important role in bilirubin detoxification. Also mediates hepatobiliary excretion of others glucuronide conjugates such as 17beta-estradiol 17-glucosiduronic acid and leukotriene C4. Transports sulfated bile salt such as taurolithocholate sulfate. Transports various anticancer drugs, such as anthracycline, vinca alkaloid and methotrexate and HIV-drugs such as protease inhibitors. The polypeptide is ATP-binding cassette sub-family C member 2 (Rattus norvegicus (Rat)).